A 155-amino-acid chain; its full sequence is Ribosome maturation factor RimP (155 aa).

The protein belongs to the RimP family.

The protein localises to the cytoplasm. In terms of biological role, required for maturation of 30S ribosomal subunits. The chain is Ribosome maturation factor RimP from Staphylococcus epidermidis (strain ATCC 35984 / DSM 28319 / BCRC 17069 / CCUG 31568 / BM 3577 / RP62A).